Reading from the N-terminus, the 341-residue chain is Heme A synthase (341 aa).

8 helical membrane-spanning segments follow: residues Val7–Ile27, Leu92–Lys112, Met118–Phe138, Leu159–Val179, Phe190–Val210, Phe253–Leu273, Leu280–Val300, and Ile302–Met322. Position 255 (His255) interacts with heme. His308 contacts heme.

The protein belongs to the COX15/CtaA family. Type 2 subfamily. As to quaternary structure, interacts with CtaB. Heme b serves as cofactor.

The protein resides in the cell membrane. It catalyses the reaction Fe(II)-heme o + 2 A + H2O = Fe(II)-heme a + 2 AH2. It participates in porphyrin-containing compound metabolism; heme A biosynthesis; heme A from heme O: step 1/1. Functionally, catalyzes the conversion of heme O to heme A by two successive hydroxylations of the methyl group at C8. The first hydroxylation forms heme I, the second hydroxylation results in an unstable dihydroxymethyl group, which spontaneously dehydrates, resulting in the formyl group of heme A. The polypeptide is Heme A synthase (Anaplasma marginale (strain Florida)).